A 501-amino-acid chain; its full sequence is Dynein regulatory complex subunit 5 (501 aa).

The span at 1-23 (MQDTVTTSALLDPSHSSVSTQDN) shows a compositional bias: polar residues. 2 disordered regions span residues 1–56 (MQDT…HPRA) and 202–222 (LPAQ…EMEE). Residues 24–34 (SSTGGHTSSTS) show a composition bias toward low complexity. LRR repeat units follow at residues 308–321 (VLEE…LIGD), 335–355 (RLRV…QSLA), 363–383 (NLIS…QALA), 391–411 (CLTT…TLLS), and 419–439 (TLTS…KQLL).

It belongs to the DRC5 family. Component of the nexin-dynein regulatory complex (N-DRC). Interacts with DRC1. Interacts with FBXL13/DRC6, DRC3 and DRC7.

The protein resides in the cell projection. It is found in the cilium. Its subcellular location is the flagellum. The protein localises to the cytoplasm. It localises to the cytoskeleton. The protein resides in the flagellum axoneme. Its function is as follows. Component of the nexin-dynein regulatory complex (N-DRC) a key regulator of ciliary/flagellar motility which maintains the alignment and integrity of the distal axoneme and regulates microtubule sliding in motile axonemes. May play a role in the assembly of N-DRC. May be required for sperm motility. The polypeptide is Dynein regulatory complex subunit 5 (TCTE1) (Homo sapiens (Human)).